The following is a 1548-amino-acid chain: Nuclear factor of activated T-cells 5 (1548 aa).

Residues 54–106 (QLPPPRETSAASMSQTSGGEAGSPPPAVVAADASSAPSSSMGGACSSFTTSSS) are disordered. Over residues 81–106 (VVAADASSAPSSSMGGACSSFTTSSS) the composition is skewed to low complexity. Position 137 is a phosphoserine (S137). K139 is modified (N6-acetyllysine). A compositionally biased stretch (polar residues) spans 141–151 (LTGNTVQQHPS). Disordered regions lie at residues 141–180 (LTGN…QDEG), 192–237 (WMED…CEES), and 258–282 (TTDN…GVKK). A Phosphoserine modification is found at S151. Residue T152 is modified to Phosphothreonine; by CDK5. Phosphoserine is present on S172. Positions 196 to 209 (SPSNFSNMSTSSYN) are enriched in low complexity. Positions 217 to 229 (KSRKRNPKQRPGV) are enriched in basic residues. A compositionally biased stretch (polar residues) spans 258–277 (TTDNKGNSKAGNGTLDSQKG). One can recognise an RHD domain in the interval 281-460 (KKSPMLCGQY…SPILCTQPAG (180 aa)). Residues 310-317 (RARYLTEG) mediate DNA binding. K572 participates in a covalent cross-link: Glycyl lysine isopeptide (Lys-Gly) (interchain with G-Cter in SUMO1); alternate. A Glycyl lysine isopeptide (Lys-Gly) (interchain with G-Cter in SUMO2); alternate cross-link involves residue K572. Residue S577 is modified to Phosphoserine. K619 is covalently cross-linked (Glycyl lysine isopeptide (Lys-Gly) (interchain with G-Cter in SUMO2)). Disordered regions lie at residues 659–682 (GNAS…QQLQ), 750–777 (TEAP…PNSV), 851–892 (PGMF…QQQQ), 970–1010 (SPPA…GAQA), 1097–1127 (LSQE…QLQP), and 1257–1388 (MQSN…QEQQ). Composition is skewed to low complexity over residues 662–672 (SFSSPSSSHLS) and 751–765 (EAPQ…EQAQ). 3 stretches are compositionally biased toward polar residues: residues 766–777 (IPSNIFPSPNSV), 851–860 (PGMFSSTESA), and 876–886 (VHQQTENTLSS). Residues 979–993 (TSTTTTPQVATPGST) are compositionally biased toward low complexity. Polar residues predominate over residues 1113–1127 (VHSQTSTASSEQLQP). The span at 1264–1283 (QEQQQQQQQQQQQQQQQQQQ) shows a compositional bias: low complexity. 2 stretches are compositionally biased toward polar residues: residues 1284 to 1300 (SILF…ASQK) and 1308 to 1333 (FSPN…SNMA). The segment covering 1334–1348 (PMNQEQQPMQFQNQP) has biased composition (low complexity). A compositionally biased stretch (polar residues) spans 1349–1388 (TVSSLQNPGPTPSESPQTSLFHSSPQIQLVQGSPSSQEQQ).

In terms of assembly, homodimer when bound to DNA, completely encircles its DNA target. Interacts with CIDEC; this interaction is direct and retains NFAT5 in the cytoplasm. Does not bind with Fos and Jun transcription factors. Interacts with DDX5 and DDX17; this interaction leads to DDX5/DDX17 recruitment to LNC2 and S100A4 promoters and NFAT5-mediated DDX5/DDX17-enhanced transactivation. Phosphorylated. Phosphorylated at Thr-152 by CDK5 in response to osmotic stress; this phosphorylation mediates its rapid nuclear localization. In terms of processing, poly-ADP-ribosylated by PARP1 in response to DNA damage, promoting recruitment to sites of R-loop-associated DNA damage.

The protein resides in the nucleus. It is found in the cytoplasm. Its subcellular location is the chromosome. Its function is as follows. Transcription factor involved, among others, in the transcriptional regulation of osmoprotective and inflammatory genes. Binds the DNA consensus sequence 5'-[ACT][AG]TGGAAA[CAT]A[TA][ATC][CA][ATG][GT][GAC][CG][CT]-3'. Mediates the transcriptional response to hypertonicity. Positively regulates the transcription of LCN2 and S100A4 genes; optimal transactivation of these genes requires the presence of DDX5/DDX17. Also involved in the DNA damage response by preventing formation of R-loops; R-loops are composed of a DNA:RNA hybrid and the associated non-template single-stranded DNA. This chain is Nuclear factor of activated T-cells 5 (Nfat5), found in Rattus norvegicus (Rat).